The chain runs to 161 residues: Regulator of ribonuclease activity A (161 aa).

The protein belongs to the RraA family. In terms of assembly, homotrimer. Binds to both RNA-binding sites in the C-terminal region of Rne and to RhlB.

The protein localises to the cytoplasm. Functionally, globally modulates RNA abundance by binding to RNase E (Rne) and regulating its endonucleolytic activity. Can modulate Rne action in a substrate-dependent manner by altering the composition of the degradosome. Modulates RNA-binding and helicase activities of the degradosome. The polypeptide is Regulator of ribonuclease activity A (Pectobacterium atrosepticum (strain SCRI 1043 / ATCC BAA-672) (Erwinia carotovora subsp. atroseptica)).